The primary structure comprises 1755 residues: Transposon Ty1-ER1 Gag-Pol polyprotein (1755 aa).

Composition is skewed to polar residues over residues 1–23, 48–60, and 127–152; these read MESQ…SVTS, TKAN…TPAS, and QSQF…GNTF. Disordered regions lie at residues 1-93, 126-174, and 352-421; these read MESQ…MMTQ, PQSQ…PPPM, and GSRN…SKST. The segment covering 153–165 has biased composition (low complexity); it reads TDSSSADSDMTST. Residues 299-401 form an RNA-binding region; it reads NNGIHINNKV…NSKSKTARAH (103 aa). A compositionally biased stretch (low complexity) spans 402–418; sequence NVSTSNNSPSTDNDSIS. Phosphoserine is present on Ser-416. Asp-461 functions as the For protease activity; shared with dimeric partner in the catalytic mechanism. The interval 583 to 640 is integrase-type zinc finger-like; it reads NVHTSESTRKYPYPFIHRMLAHANAQTIRYSLKNNTITYFNESDVDWSSAIDYQCPDC. In terms of domain architecture, Integrase catalytic spans 660-835; that stretch reads NSYEPFQYLH…AGLDISTLLP (176 aa). Asp-671 and Asp-736 together coordinate Mg(2+). Disordered stretches follow at residues 956–1087, 1092–1111, and 1130–1171; these read SKAV…ETEK, RSPS…NIVP, and DLPL…DSNA. Low complexity predominate over residues 960-969; sequence SPTDSTPPST. Residues 1005 to 1015 are compositionally biased toward polar residues; the sequence is STPQISNIEST. Residues 1038–1053 show a composition bias toward basic and acidic residues; that stretch reads ESSHASKSKDFRHSDS. Polar residues-rich tracts occupy residues 1054-1082 and 1101-1111; these read YSEN…QISD and PENNSSHNIVP. The short motif at 1178-1212 is the Bipartite nuclear localization signal element; it reads KKRSLEDNETEIKVSRDTWNTKNMRSLEPPRSKKR. Residues 1338–1476 enclose the Reverse transcriptase Ty1/copia-type domain; it reads NNYYITQLDI…DILGLEIKYQ (139 aa). The Mg(2+) site is built by Asp-1346, Asp-1427, Asp-1428, Asp-1610, Glu-1652, and Asp-1685. The RNase H Ty1/copia-type domain occupies 1610–1752; sequence DASYGNQPYY…IKTFKLLTNK (143 aa).

The capsid protein forms a homotrimer, from which the VLPs are assembled. The protease is a homodimer, whose active site consists of two apposed aspartic acid residues. Post-translationally, initially, virus-like particles (VLPs) are composed of the structural unprocessed proteins Gag and Gag-Pol, and also contain the host initiator methionine tRNA (tRNA(i)-Met) which serves as a primer for minus-strand DNA synthesis, and a dimer of genomic Ty RNA. Processing of the polyproteins occurs within the particle and proceeds by an ordered pathway, called maturation. First, the protease (PR) is released by autocatalytic cleavage of the Gag-Pol polyprotein yielding capsid protein p45 and a Pol-p154 precursor protein. This cleavage is a prerequisite for subsequent processing of Pol-p154 at the remaining sites to release the mature structural and catalytic proteins. Maturation takes place prior to the RT reaction and is required to produce transposition-competent VLPs.

The protein localises to the cytoplasm. It is found in the nucleus. It carries out the reaction DNA(n) + a 2'-deoxyribonucleoside 5'-triphosphate = DNA(n+1) + diphosphate. The enzyme catalyses Endonucleolytic cleavage to 5'-phosphomonoester.. Capsid protein (CA) is the structural component of the virus-like particle (VLP), forming the shell that encapsulates the retrotransposons dimeric RNA genome. The particles are assembled from trimer-clustered units and there are holes in the capsid shells that allow for the diffusion of macromolecules. CA also has nucleocapsid-like chaperone activity, promoting primer tRNA(i)-Met annealing to the multipartite primer-binding site (PBS), dimerization of Ty1 RNA and initiation of reverse transcription. Functionally, the aspartyl protease (PR) mediates the proteolytic cleavages of the Gag and Gag-Pol polyproteins after assembly of the VLP. Its function is as follows. Reverse transcriptase/ribonuclease H (RT) is a multifunctional enzyme that catalyzes the conversion of the retro-elements RNA genome into dsDNA within the VLP. The enzyme displays a DNA polymerase activity that can copy either DNA or RNA templates, and a ribonuclease H (RNase H) activity that cleaves the RNA strand of RNA-DNA heteroduplexes during plus-strand synthesis and hydrolyzes RNA primers. The conversion leads to a linear dsDNA copy of the retrotransposon that includes long terminal repeats (LTRs) at both ends. In terms of biological role, integrase (IN) targets the VLP to the nucleus, where a subparticle preintegration complex (PIC) containing at least integrase and the newly synthesized dsDNA copy of the retrotransposon must transit the nuclear membrane. Once in the nucleus, integrase performs the integration of the dsDNA into the host genome. This is Transposon Ty1-ER1 Gag-Pol polyprotein (TY1B-ER1) from Saccharomyces cerevisiae (strain ATCC 204508 / S288c) (Baker's yeast).